A 246-amino-acid chain; its full sequence is Carboxy-S-adenosyl-L-methionine synthase (246 aa).

Residues Tyr-39, 64-66 (GCS), 89-90 (DN), 117-118 (DI), Asn-132, and Arg-199 contribute to the S-adenosyl-L-methionine site.

This sequence belongs to the class I-like SAM-binding methyltransferase superfamily. Cx-SAM synthase family. As to quaternary structure, homodimer.

The enzyme catalyses prephenate + S-adenosyl-L-methionine = carboxy-S-adenosyl-L-methionine + 3-phenylpyruvate + H2O. Catalyzes the conversion of S-adenosyl-L-methionine (SAM) to carboxy-S-adenosyl-L-methionine (Cx-SAM). The protein is Carboxy-S-adenosyl-L-methionine synthase of Erwinia tasmaniensis (strain DSM 17950 / CFBP 7177 / CIP 109463 / NCPPB 4357 / Et1/99).